Reading from the N-terminus, the 515-residue chain is Serine/threonine-protein phosphatase PP-Z (515 aa).

Positions 1–186 are disordered; sequence MGQGSSKHAD…SSTDPDDPET (186 aa). A compositionally biased stretch (polar residues) spans 17 to 30; the sequence is PSFSRSDTQGSIKS. Residue serine 18 is modified to Phosphoserine. Residues 40-51 show a composition bias toward basic and acidic residues; it reads KGKDSNHDRRTS. Over residues 63-74 the composition is skewed to pro residues; that stretch reads ETPPSLPPPPSP. Residues 91 to 109 are compositionally biased toward polar residues; it reads DSGNSSQSPTSPHPSNQPA. Residues 126–143 are compositionally biased toward low complexity; it reads SSSSYAVSPTSPTSPTSS. Residues aspartate 248, histidine 250, aspartate 276, and asparagine 308 each coordinate Mn(2+). The active-site Proton donor is the histidine 309. Mn(2+) is bound by residues histidine 357 and histidine 432. Residues serine 505 and serine 514 each carry the phosphoserine modification.

This sequence belongs to the PPP phosphatase family. PP-Z subfamily. Mn(2+) serves as cofactor.

It localises to the cytoplasm. The enzyme catalyses O-phospho-L-seryl-[protein] + H2O = L-seryl-[protein] + phosphate. It carries out the reaction O-phospho-L-threonyl-[protein] + H2O = L-threonyl-[protein] + phosphate. The polypeptide is Serine/threonine-protein phosphatase PP-Z (pzh1) (Schizosaccharomyces pombe (strain 972 / ATCC 24843) (Fission yeast)).